We begin with the raw amino-acid sequence, 709 residues long: Pentatricopeptide repeat-containing protein At5g42310, chloroplastic (709 aa).

The N-terminal 54 residues, Met-1–Ser-54, are a transit peptide targeting the chloroplast. PPR repeat units lie at residues Thr-196–Ser-230, Asp-231–Leu-267, Asp-268–Ala-302, Lys-303–Pro-337, Arg-338–Pro-372, Asp-373–Pro-407, Asn-408–Pro-442, Asp-443–Pro-477, Asp-478–Pro-512, Cys-513–Pro-547, Asn-548–Pro-582, Ser-583–Pro-617, Ser-618–Pro-652, and Asp-653–Pro-687.

It belongs to the PPR family. P subfamily. Interacts with PDE338.

It is found in the plastid. The protein resides in the chloroplast stroma. Its subcellular location is the chloroplast thylakoid. The protein localises to the chloroplast. In terms of biological role, required for chloroplast protein synthesis and accumulation of subunits of the thylakoid protein complexes. Activates psaC and petA translation by binding their 5'-UTRs. Required for the correct processing of petB and petD mRNAs. Interacts with the petB and petD intergenic region and is required for the generation of petB and petD monocistronic RNAs. The chain is Pentatricopeptide repeat-containing protein At5g42310, chloroplastic from Arabidopsis thaliana (Mouse-ear cress).